A 293-amino-acid chain; its full sequence is 4-hydroxy-tetrahydrodipicolinate synthase (293 aa).

Position 45 (Thr-45) interacts with pyruvate. Tyr-133 (proton donor/acceptor) is an active-site residue. The Schiff-base intermediate with substrate role is filled by Lys-161. Pyruvate is bound at residue Ile-204.

This sequence belongs to the DapA family. Homotetramer; dimer of dimers.

The protein localises to the cytoplasm. It carries out the reaction L-aspartate 4-semialdehyde + pyruvate = (2S,4S)-4-hydroxy-2,3,4,5-tetrahydrodipicolinate + H2O + H(+). The protein operates within amino-acid biosynthesis; L-lysine biosynthesis via DAP pathway; (S)-tetrahydrodipicolinate from L-aspartate: step 3/4. Functionally, catalyzes the condensation of (S)-aspartate-beta-semialdehyde [(S)-ASA] and pyruvate to 4-hydroxy-tetrahydrodipicolinate (HTPA). This Edwardsiella ictaluri (strain 93-146) protein is 4-hydroxy-tetrahydrodipicolinate synthase.